Reading from the N-terminus, the 429-residue chain is Fumarylacetoacetase (429 aa).

Asp-139 provides a ligand contact to Ca(2+). His-146 (proton acceptor) is an active-site residue. Arg-155 is a substrate binding site. Positions 212, 214, and 246 each coordinate Ca(2+). Asp-246 contacts Mg(2+). Gln-253 lines the substrate pocket. Mg(2+) is bound by residues Lys-266 and Thr-270. Thr-363 provides a ligand contact to substrate.

Belongs to the FAH family. Ca(2+) serves as cofactor. Mg(2+) is required as a cofactor.

The catalysed reaction is 4-fumarylacetoacetate + H2O = acetoacetate + fumarate + H(+). The protein operates within amino-acid degradation; L-phenylalanine degradation; acetoacetate and fumarate from L-phenylalanine: step 6/6. Functionally, converts fumarylacetoacetate to acetoacetate and fumarate. Involved in tyrosine catabolic pathway. Catalyzes the final step in the tyrosine degradation pathway. The sequence is that of Fumarylacetoacetase from Oryza sativa subsp. japonica (Rice).